Consider the following 418-residue polypeptide: Acyltransferase calJ (418 aa).

The active-site Acyl-ester intermediate is Ser79. Positions 176 and 191 each coordinate substrate.

It belongs to the class-A beta-lactamase family.

It functions in the pathway secondary metabolite biosynthesis. Its function is as follows. Acyltransferase; part of the gene cluster that mediates the biosynthesis of calbistrin A and related compounds. Calbistrin A is a secondary metabolite with an interesting structure that was recently found to have bioactivity against leukemia cells. It consists of two polyketides linked by an ester bond: a bicyclic decalin containing polyketide and a linear 12 carbon dioic acid structure. The polyketide synthase calA is probably responsible for forming the decalin moiety. Because calA lacks a designated enoylreductase (ER) domain, the required activity is provided by the trans-enoyl reductase calK. Following release from the PKS, calF then probably catalyzes the oxidation and the subsequent Diels Alder cycloisomerization that lead to the formation of the decalin moiety. The decalin polyketide backbone includes two C-methyl groups, at C7 and C11 in backbone, of which the C7 position is probably methylated by the methyltransferase domain of calA. A candidate for adding the methyl group at C11, if not done by CalA, is the cluster methyltransferase calH. Several additional tailoring enzymes within the cluster could be involved in the modification of the decalin polyketide product. Those include the 3 cytochrome P450 monooxygenases CalE, CalG and CalL, of which one might be responsible for the introduction of the extra hydroxyl group attached to the backbone of the decalin moiety, at position C9 in the backbone, that allows for attachment of the linear moiety. One tailoring enzyme activity that is expected to be involved in biosynthesis of calbistrin is an acyltransferase for connecting the two polyketide synthase products, and which could be performed by the cluster acyltransferase calJ. The enzyme responsible for the biosynthesis of the linear moiety, probably a second PKS, has not been identified yet. This Penicillium decumbens protein is Acyltransferase calJ.